We begin with the raw amino-acid sequence, 79 residues long: Sec-independent protein translocase protein TatA (79 aa).

The chain crosses the membrane as a helical span at residues 1 to 21 (MGGISIWQLLIIALIVILLFG). The interval 42-79 (AMTSETSEEEKKALEDSQTAQTSQQAEKKPESKDKEQA) is disordered. The segment covering 57–66 (DSQTAQTSQQ) has biased composition (polar residues). Residues 67–79 (AEKKPESKDKEQA) show a composition bias toward basic and acidic residues.

It belongs to the TatA/E family. As to quaternary structure, the Tat system comprises two distinct complexes: a TatABC complex, containing multiple copies of TatA, TatB and TatC subunits, and a separate TatA complex, containing only TatA subunits. Substrates initially bind to the TatABC complex, which probably triggers association of the separate TatA complex to form the active translocon.

It localises to the cell inner membrane. Its function is as follows. Part of the twin-arginine translocation (Tat) system that transports large folded proteins containing a characteristic twin-arginine motif in their signal peptide across membranes. TatA could form the protein-conducting channel of the Tat system. The chain is Sec-independent protein translocase protein TatA from Shewanella denitrificans (strain OS217 / ATCC BAA-1090 / DSM 15013).